A 231-amino-acid chain; its full sequence is Protein OPG061 (231 aa).

Belongs to the orthopoxvirus OPG058 family.

It localises to the host nucleus. It is found in the host nucleolus. This Homo sapiens (Human) protein is Protein OPG061 (OPG061).